Reading from the N-terminus, the 603-residue chain is Probable GMP synthase [glutamine-hydrolyzing] (603 aa).

The Glutamine amidotransferase type-1 domain maps to 6–195 (KIAVVDFGGQ…FIQICGVSKT (190 aa)). Cysteine 81 (nucleophile) is an active-site residue. Catalysis depends on residues histidine 170 and glutamate 172. One can recognise a GMPS ATP-PPase domain in the interval 196–392 (WGIDQFLKEK…LGLESEWVGR (197 aa)). 224 to 230 (SGGVDST) is a binding site for ATP.

Homodimer.

It catalyses the reaction XMP + L-glutamine + ATP + H2O = GMP + L-glutamate + AMP + diphosphate + 2 H(+). Its pathway is purine metabolism; GMP biosynthesis; GMP from XMP (L-Gln route): step 1/1. Functionally, catalyzes the synthesis of GMP from XMP. The polypeptide is Probable GMP synthase [glutamine-hydrolyzing] (guaA) (Leptospira interrogans serogroup Icterohaemorrhagiae serovar copenhageni (strain Fiocruz L1-130)).